The primary structure comprises 305 residues: MLDTSIQELINKWQQYLILQKNYSHHTVVSYNNDLKHFLEFMHYYNSDLVTINHIKTADIRLIRSWLAKRNCNNFTTSSISRGLSAVKNFYKFLEKTTQLNSHIIFSIKSPKKTKLLPKSLSEDDVVISLKHIEEYGNVKWVELRNKALLVLIYATGLRISEALSITKLHLQNLEFIRIIGKGSKERIIPWLPIVKNLITQYLEILPYKLGENEPIFRGKQGKKLQPTVFNRELIKLKRFYGLPEHLTAHSFRHSFASHLLEHGADLRSIQELLGHKSLSTTQNYTKTSIKHLVSVYTSAYPIKK.

In terms of domain architecture, Core-binding (CB) spans 4-95 (TSIQELINKW…AVKNFYKFLE (92 aa)). The region spanning 116–298 (LLPKSLSEDD…SIKHLVSVYT (183 aa)) is the Tyr recombinase domain. Residues Arg-159, Lys-182, His-250, Arg-253, and His-276 contribute to the active site. Tyr-285 functions as the O-(3'-phospho-DNA)-tyrosine intermediate in the catalytic mechanism.

It belongs to the 'phage' integrase family. XerC subfamily. In terms of assembly, forms a cyclic heterotetrameric complex composed of two molecules of XerC and two molecules of XerD.

The protein resides in the cytoplasm. Its function is as follows. Site-specific tyrosine recombinase, which acts by catalyzing the cutting and rejoining of the recombining DNA molecules. The XerC-XerD complex is essential to convert dimers of the bacterial chromosome into monomers to permit their segregation at cell division. It also contributes to the segregational stability of plasmids. This chain is Tyrosine recombinase XerC, found in Rickettsia canadensis (strain McKiel).